We begin with the raw amino-acid sequence, 233 residues long: MAKLTKRMRVIREKVDGTKLYEINDAVALLKELATAKFVESVDVAVNLGIDPRKSDQNVRGATVLPHGTGRDVRVAVFTQGANAEAAKAAGAELVGMDDLAEQIKAGEMNFDVVIASPDAMRVVGMLGQILGPRGLMPNPKTGTVTPNVAEAVKNAKAGQVRYRNDKNGIIHTTIGKVDFTPVQLKENLEALISALKKAKPAVAKGVYVKKVSISTTMGAGVAIDQATLETAN.

This sequence belongs to the universal ribosomal protein uL1 family. Part of the 50S ribosomal subunit.

Its function is as follows. Binds directly to 23S rRNA. The L1 stalk is quite mobile in the ribosome, and is involved in E site tRNA release. Functionally, protein L1 is also a translational repressor protein, it controls the translation of the L11 operon by binding to its mRNA. The chain is Large ribosomal subunit protein uL1 from Shewanella sp. (strain MR-4).